Here is a 291-residue protein sequence, read N- to C-terminus: MEMO1 family protein PYRAB05390 (291 aa).

It belongs to the MEMO1 family.

The polypeptide is MEMO1 family protein PYRAB05390 (Pyrococcus abyssi (strain GE5 / Orsay)).